A 262-amino-acid polypeptide reads, in one-letter code: Small ribosomal subunit protein mS23 (262 aa).

A disordered region spans residues 211-262 (SGQSDEAPEGEGSDMSAGEYDMAVEELAGQGSIPNTPQSTVVPEGTSAPAHA). A compositionally biased stretch (polar residues) spans 242–251 (SIPNTPQSTV).

This sequence belongs to the mitochondrion-specific ribosomal protein mS23 family. In terms of assembly, component of the mitochondrial small ribosomal subunit.

The protein localises to the mitochondrion. The chain is Small ribosomal subunit protein mS23 (RSM25) from Phaeosphaeria nodorum (strain SN15 / ATCC MYA-4574 / FGSC 10173) (Glume blotch fungus).